The sequence spans 336 residues: Dihydroorotate dehydrogenase (quinone) (336 aa).

Residues 62-66 and T86 each bind FMN; that span reads AGLDK. K66 contributes to the substrate binding site. Residue 111–115 coordinates substrate; the sequence is NRMGF. FMN is bound by residues N139 and N172. N172 lines the substrate pocket. The active-site Nucleophile is the S175. N177 provides a ligand contact to substrate. K217 and T245 together coordinate FMN. 246-247 is a substrate binding site; that stretch reads NT. Residues G268, G297, and 318–319 each bind FMN; that span reads YS.

The protein belongs to the dihydroorotate dehydrogenase family. Type 2 subfamily. Monomer. It depends on FMN as a cofactor.

It is found in the cell membrane. It carries out the reaction (S)-dihydroorotate + a quinone = orotate + a quinol. It participates in pyrimidine metabolism; UMP biosynthesis via de novo pathway; orotate from (S)-dihydroorotate (quinone route): step 1/1. In terms of biological role, catalyzes the conversion of dihydroorotate to orotate with quinone as electron acceptor. This Shigella dysenteriae serotype 1 (strain Sd197) protein is Dihydroorotate dehydrogenase (quinone).